The primary structure comprises 366 residues: Isocitrate dehydrogenase [NAD] subunit alpha, mitochondrial (366 aa).

The transit peptide at 1–27 (MAGPAWISKVSRLLGAFHNPKQVTRGF) directs the protein to the mitochondrion. Lys-77 bears the N6-succinyllysine mark. Thr-101 is subject to Phosphothreonine. Positions 115, 125, and 146 each coordinate substrate. N6-acetyllysine is present on Lys-223. 3 residues coordinate Mg(2+): Asp-233, Asp-257, and Asp-261. Lys-343 is modified (N6-acetyllysine; alternate). At Lys-343 the chain carries N6-succinyllysine; alternate. Lys-350 is modified (N6-succinyllysine).

This sequence belongs to the isocitrate and isopropylmalate dehydrogenases family. In terms of assembly, heterooligomer of subunits alpha (IDH3A), beta (IDH3B), and gamma (IDH3G) in the apparent ratio of 2:1:1. The heterodimer containing one IDH3A and one IDH3B subunit and the heterodimer containing one IDH3A and one IDH3G subunit assemble into a heterotetramer (which contains two subunits of IDH3A, one of IDH3B and one of IDH3G) and further into the heterooctamer. It depends on Mg(2+) as a cofactor. Mn(2+) is required as a cofactor.

It is found in the mitochondrion. The enzyme catalyses D-threo-isocitrate + NAD(+) = 2-oxoglutarate + CO2 + NADH. The heterotetramer and the heterodimer composed of IDH3A and IDH3G subunits can be allosterically activated by citrate (CIT) or/and ADP, and the two activators can act independently or synergistically. The heterodimer composed of IDH3A and IDH3B subunits cannot be allosterically regulated and the allosteric regulation of the heterotetramer is through the IDH3G subunit and not the IDH3B subunit. The IDH3G subunit contains the allosteric site which consists of a CIT-binding site and an ADP-binding site, and the binding of CIT and ADP causes conformational changes at the allosteric site which are transmitted to the active site in the catalytic subunit (IDH3A) through a cascade of conformational changes at the heterodimer interface, leading to stabilization of the isocitrate-binding at the active site and thus activation of the enzyme. ATP can activate the heterotetramer and the heterodimer composed of IDH3A and IDH3G subunits at low concentrations but inhibits their activities at high concentrations, whereas ATP exhibits only inhibitory effect on the heterodimer composed of IDH3A and IDH3B subunits. In terms of biological role, catalytic subunit of the enzyme which catalyzes the decarboxylation of isocitrate (ICT) into alpha-ketoglutarate. The heterodimer composed of the alpha (IDH3A) and beta (IDH3B) subunits and the heterodimer composed of the alpha (IDH3A) and gamma (IDH3G) subunits, have considerable basal activity but the full activity of the heterotetramer (containing two subunits of IDH3A, one of IDH3B and one of IDH3G) requires the assembly and cooperative function of both heterodimers. This chain is Isocitrate dehydrogenase [NAD] subunit alpha, mitochondrial, found in Pongo abelii (Sumatran orangutan).